A 93-amino-acid polypeptide reads, in one-letter code: Small ribosomal subunit protein uS19 (93 aa).

It belongs to the universal ribosomal protein uS19 family.

Functionally, protein S19 forms a complex with S13 that binds strongly to the 16S ribosomal RNA. This is Small ribosomal subunit protein uS19 from Ruminiclostridium cellulolyticum (strain ATCC 35319 / DSM 5812 / JCM 6584 / H10) (Clostridium cellulolyticum).